Here is a 578-residue protein sequence, read N- to C-terminus: Proline--tRNA ligase (578 aa).

Belongs to the class-II aminoacyl-tRNA synthetase family. ProS type 1 subfamily. Homodimer.

It localises to the cytoplasm. The catalysed reaction is tRNA(Pro) + L-proline + ATP = L-prolyl-tRNA(Pro) + AMP + diphosphate. Functionally, catalyzes the attachment of proline to tRNA(Pro) in a two-step reaction: proline is first activated by ATP to form Pro-AMP and then transferred to the acceptor end of tRNA(Pro). As ProRS can inadvertently accommodate and process non-cognate amino acids such as alanine and cysteine, to avoid such errors it has two additional distinct editing activities against alanine. One activity is designated as 'pretransfer' editing and involves the tRNA(Pro)-independent hydrolysis of activated Ala-AMP. The other activity is designated 'posttransfer' editing and involves deacylation of mischarged Ala-tRNA(Pro). The misacylated Cys-tRNA(Pro) is not edited by ProRS. The chain is Proline--tRNA ligase from Burkholderia vietnamiensis (strain G4 / LMG 22486) (Burkholderia cepacia (strain R1808)).